The sequence spans 329 residues: 4-hydroxythreonine-4-phosphate dehydrogenase (329 aa).

The substrate site is built by H136 and T137. A divalent metal cation-binding residues include H166, H211, and H266. The substrate site is built by K274, N283, and R292.

It belongs to the PdxA family. As to quaternary structure, homodimer. Zn(2+) serves as cofactor. The cofactor is Mg(2+). Requires Co(2+) as cofactor.

The protein resides in the cytoplasm. The enzyme catalyses 4-(phosphooxy)-L-threonine + NAD(+) = 3-amino-2-oxopropyl phosphate + CO2 + NADH. Its pathway is cofactor biosynthesis; pyridoxine 5'-phosphate biosynthesis; pyridoxine 5'-phosphate from D-erythrose 4-phosphate: step 4/5. In terms of biological role, catalyzes the NAD(P)-dependent oxidation of 4-(phosphooxy)-L-threonine (HTP) into 2-amino-3-oxo-4-(phosphooxy)butyric acid which spontaneously decarboxylates to form 3-amino-2-oxopropyl phosphate (AHAP). The polypeptide is 4-hydroxythreonine-4-phosphate dehydrogenase (Pseudomonas putida (strain ATCC 47054 / DSM 6125 / CFBP 8728 / NCIMB 11950 / KT2440)).